Reading from the N-terminus, the 562-residue chain is Dihydroxy-acid dehydratase (562 aa).

Position 80 (aspartate 80) interacts with Mg(2+). Residue cysteine 121 participates in [2Fe-2S] cluster binding. Residues aspartate 122 and lysine 123 each coordinate Mg(2+). Lysine 123 is subject to N6-carboxylysine. [2Fe-2S] cluster is bound at residue cysteine 194. Glutamate 446 contributes to the Mg(2+) binding site. Catalysis depends on serine 472, which acts as the Proton acceptor.

It belongs to the IlvD/Edd family. As to quaternary structure, homodimer. [2Fe-2S] cluster is required as a cofactor. Requires Mg(2+) as cofactor.

The catalysed reaction is (2R)-2,3-dihydroxy-3-methylbutanoate = 3-methyl-2-oxobutanoate + H2O. It carries out the reaction (2R,3R)-2,3-dihydroxy-3-methylpentanoate = (S)-3-methyl-2-oxopentanoate + H2O. It functions in the pathway amino-acid biosynthesis; L-isoleucine biosynthesis; L-isoleucine from 2-oxobutanoate: step 3/4. Its pathway is amino-acid biosynthesis; L-valine biosynthesis; L-valine from pyruvate: step 3/4. In terms of biological role, functions in the biosynthesis of branched-chain amino acids. Catalyzes the dehydration of (2R,3R)-2,3-dihydroxy-3-methylpentanoate (2,3-dihydroxy-3-methylvalerate) into 2-oxo-3-methylpentanoate (2-oxo-3-methylvalerate) and of (2R)-2,3-dihydroxy-3-methylbutanoate (2,3-dihydroxyisovalerate) into 2-oxo-3-methylbutanoate (2-oxoisovalerate), the penultimate precursor to L-isoleucine and L-valine, respectively. In Staphylococcus aureus (strain COL), this protein is Dihydroxy-acid dehydratase.